Reading from the N-terminus, the 92-residue chain is Acyl carrier protein AcpXL (92 aa).

Residues 2-88 (TATFDKVADI…NLCAKIDELK (87 aa)) enclose the Carrier domain. An O-(pantetheine 4'-phosphoryl)serine modification is found at Ser-37.

Post-translationally, 4'-phosphopantetheine is transferred from CoA to a specific serine of apo-ACP by AcpS. This modification is essential for activity because fatty acids are bound in thioester linkage to the sulfhydryl of the prosthetic group.

It localises to the cytoplasm. Its pathway is glycolipid biosynthesis; KDO(2)-lipid A biosynthesis. In terms of biological role, carrier of the growing fatty acid chain in fatty acid biosynthesis. Is involved in the transfer of long hydroxylated fatty acids to lipid A. Is acylated predominantly with 27-hydroxyoctacosanoic acid. This is Acyl carrier protein AcpXL (acpXL) from Rhizobium etli (strain ATCC 51251 / DSM 11541 / JCM 21823 / NBRC 15573 / CFN 42).